Reading from the N-terminus, the 23-residue chain is Paralytic peptide 1 (23 aa).

A disulfide bond links cysteine 7 and cysteine 19.

It belongs to the GBP/PSP1/paralytic peptide family. In terms of tissue distribution, hemolymph.

Its function is as follows. Causes rapid, rigid paralysis when injected into Lepidopteran larvae. The physiological role may be to reduce hemolymph loss following injury and promote wound healing. The polypeptide is Paralytic peptide 1 (Heliothis virescens (Tobacco budworm moth)).